The following is a 293-amino-acid chain: Small ribosomal subunit protein uS3 (293 aa).

Residues 39 to 110 (IRREIMKFLK…KISIKIKEVK (72 aa)) enclose the KH type-2 domain.

This sequence belongs to the universal ribosomal protein uS3 family. In terms of assembly, part of the 30S ribosomal subunit. Forms a tight complex with proteins S10 and S14.

Binds the lower part of the 30S subunit head. Binds mRNA in the 70S ribosome, positioning it for translation. This is Small ribosomal subunit protein uS3 from Borreliella burgdorferi (strain ATCC 35210 / DSM 4680 / CIP 102532 / B31) (Borrelia burgdorferi).